The sequence spans 304 residues: Secreted mono- and diacylglycerol lipase MDL2 (304 aa).

An N-terminal signal peptide occupies residues 1 to 19 (MILGRTISLFLGCSALVSG). Cysteine 55 and cysteine 297 form a disulfide bridge. Asparagine 102 and asparagine 161 each carry an N-linked (GlcNAc...) asparagine glycan. Residue serine 171 is the Nucleophile of the active site. The active site involves aspartate 228. A glycan (N-linked (GlcNAc...) asparagine) is linked at asparagine 253. Histidine 281 is an active-site residue.

The protein belongs to the AB hydrolase superfamily. Lipase family. Class 3 subfamily.

The protein resides in the secreted. The protein localises to the cell wall. It carries out the reaction a monoacylglycerol + H2O = glycerol + a fatty acid + H(+). The enzyme catalyses a diacylglycerol + H2O = a monoacylglycerol + a fatty acid + H(+). Its function is as follows. Secreted lipase involved in Dandruff and seborrheic dermatitis (D/SD) probably via lipase-mediated breakdown of sebaceous lipids and release of irritating free fatty acids. Shows activity against monoglyceride and diglyceride substrates, but not triglyceride substrates and does not exhibit regio-selective production of diacylglycerols. Hydrolyzes both 1,2- and 1,3-diacylglycerols. Also hydrolyzes distearin, dilinolein and dipalmitolein. Cleaves oleic acid from 1,2 isomers of diolein on both the 1 and the 2 position of the glycerol backbone, resulting mainly in free fatty acids but no monoolein is detected. Shows activity on monoolein and liberates mostly free fatty acids, but can also perform the reverse reaction and produce diolein. The protein is Secreted mono- and diacylglycerol lipase MDL2 of Malassezia globosa (strain ATCC MYA-4612 / CBS 7966) (Dandruff-associated fungus).